The following is a 151-amino-acid chain: Transcription antitermination protein NusB (151 aa).

This sequence belongs to the NusB family.

Involved in transcription antitermination. Required for transcription of ribosomal RNA (rRNA) genes. Binds specifically to the boxA antiterminator sequence of the ribosomal RNA (rrn) operons. This chain is Transcription antitermination protein NusB, found in Thermus thermophilus (strain ATCC BAA-163 / DSM 7039 / HB27).